We begin with the raw amino-acid sequence, 281 residues long: Endochitinase At2g43610 (281 aa).

The signal sequence occupies residues 1–28; sequence MATQNAILKKALIIFLFTLTIMTGTAFS. Residues 29 to 66 enclose the Chitin-binding type-1 domain; that stretch reads QNCGTNGCKGNMCCSRWGYCGTTKAYCGTGCQSGPCNS. 4 cysteine pairs are disulfide-bonded: cysteine 31–cysteine 42, cysteine 36–cysteine 48, cysteine 41–cysteine 55, and cysteine 59–cysteine 64. Residues 86–281 are catalytic; it reads GTIASVITPA…GVTPGTNLSC (196 aa). The active-site Proton donor is glutamate 148. N-linked (GlcNAc...) asparagine glycosylation occurs at asparagine 278.

The protein belongs to the glycosyl hydrolase 19 family. Chitinase class I subfamily.

It catalyses the reaction Random endo-hydrolysis of N-acetyl-beta-D-glucosaminide (1-&gt;4)-beta-linkages in chitin and chitodextrins.. This chain is Endochitinase At2g43610, found in Arabidopsis thaliana (Mouse-ear cress).